The following is a 254-amino-acid chain: 5-oxoprolinase subunit A (254 aa).

It belongs to the LamB/PxpA family. As to quaternary structure, forms a complex composed of PxpA, PxpB and PxpC.

It catalyses the reaction 5-oxo-L-proline + ATP + 2 H2O = L-glutamate + ADP + phosphate + H(+). In terms of biological role, catalyzes the cleavage of 5-oxoproline to form L-glutamate coupled to the hydrolysis of ATP to ADP and inorganic phosphate. This Acinetobacter baumannii (strain ACICU) protein is 5-oxoprolinase subunit A.